The following is a 660-amino-acid chain: Peroxisomal acyl-coenzyme A oxidase 1 (660 aa).

Serine 26 carries the post-translational modification Phosphoserine. Residues lysine 89 and lysine 90 each carry the N6-succinyllysine modification. The FAD site is built by threonine 139 and glycine 178. An N6-acetyllysine modification is found at lysine 216. Position 241 is an N6-succinyllysine (lysine 241). N6-acetyllysine occurs at positions 255, 267, and 272. Lysine 349 carries the N6-succinyllysine modification. Glutamate 421 (proton acceptor) is an active-site residue. N6-acetyllysine; alternate occurs at positions 437 and 446. N6-succinyllysine; alternate occurs at positions 437 and 446. An N6-acetyllysine mark is found at lysine 500 and lysine 504. At lysine 512 the chain carries N6-acetyllysine; alternate. Residue lysine 512 is modified to N6-succinyllysine; alternate. At lysine 542 the chain carries N6-succinyllysine. At lysine 637 the chain carries N6-acetyllysine; alternate. The residue at position 637 (lysine 637) is an N6-succinyllysine; alternate. Lysine 643 carries the post-translational modification N6-succinyllysine. The residue at position 649 (serine 649) is a Phosphoserine. The residue at position 651 (lysine 651) is an N6-acetyllysine. Position 654 is an N6-succinyllysine (lysine 654). The Microbody targeting signal signature appears at 658 to 660; the sequence is SKL.

It belongs to the acyl-CoA oxidase family. Homodimer. Interacts with LONP2. FAD is required as a cofactor. Widely expressed with highest levels of isoform 1 and isoform 2 detected in testis. Isoform 1 is expressed at higher levels than isoform 2 in liver and kidney while isoform 2 levels are higher in brain, lung, muscle, white adipose tissue and testis. Levels are almost equal in heart.

The protein localises to the peroxisome. The enzyme catalyses a 2,3-saturated acyl-CoA + O2 = a (2E)-enoyl-CoA + H2O2. The catalysed reaction is hexadecanoyl-CoA + O2 = (2E)-hexadecenoyl-CoA + H2O2. It carries out the reaction dodecanoyl-CoA + O2 = (2E)-dodecenoyl-CoA + H2O2. It catalyses the reaction octanoyl-CoA + O2 = (2E)-octenoyl-CoA + H2O2. The enzyme catalyses decanoyl-CoA + O2 = (2E)-decenoyl-CoA + H2O2. The catalysed reaction is tetradecanoyl-CoA + O2 = (2E)-tetradecenoyl-CoA + H2O2. It carries out the reaction hexadecanedioyl-CoA + O2 = (2E)-hexadecenedioyl-CoA + H2O2. It catalyses the reaction (5Z,8Z,11Z,14Z,17Z)-eicosapentaenoyl-CoA + O2 = (2E,5Z,8Z,11Z,14Z,17Z)-icosahexaenoyl-CoA + H2O2. The enzyme catalyses tetracosanoyl-CoA + O2 = (2E)-tetracosenoyl-CoA + H2O2. The catalysed reaction is glutaryl-CoA + O2 = (2E)-glutaconyl-CoA + H2O2. It carries out the reaction hexanoyl-CoA + O2 = (2E)-hexenoyl-CoA + H2O2. It catalyses the reaction octadecanoyl-CoA + O2 = (2E)-octadecenoyl-CoA + H2O2. The enzyme catalyses (6Z,9Z,12Z,15Z,18Z,21Z)-tetracosahexaenoyl-CoA + O2 = (2E,6Z,9Z,12Z,15Z,18Z,21Z)-tetracosaheptaenoyl-CoA + H2O2. It functions in the pathway lipid metabolism; peroxisomal fatty acid beta-oxidation. Functionally, involved in the initial and rate-limiting step of peroxisomal beta-oxidation of straight-chain saturated and unsaturated very-long-chain fatty acids. Catalyzes the desaturation of fatty acyl-CoAs such as palmitoyl-CoA (hexadecanoyl-CoA) to 2-trans-enoyl-CoAs ((2E)-enoyl-CoAs) such as (2E)-hexadecenoyl-CoA, and donates electrons directly to molecular oxygen (O(2)), thereby producing hydrogen peroxide (H(2)O(2)). Its function is as follows. Shows highest activity against medium-chain fatty acyl-CoAs. Shows optimum activity with a chain length of 10 carbons (decanoyl-CoA) in vitro. Is active against a much broader range of substrates and shows activity towards long-chain fatty acyl-CoAs. The polypeptide is Peroxisomal acyl-coenzyme A oxidase 1 (Homo sapiens (Human)).